The primary structure comprises 211 residues: MTIGVVGRKCGMTRIFTEEGVSIPVTVIEIEPNRVTQFKTEETDGYRAVQVTVGERRASRVTAAQAGHFAKANVAAGRTVMEFRLEEGDYQAGDQINAEIFAAGQLVDVTGQSKGKGFQGTIKRWNFRGQDNTHGNSVSHRVPGSIGQCQTPGRVFKGKKMSGHMGAERVTVQSLEVVRVDAERNLLLVKGAVPGATGGNLVVRPAAKARG.

Gln150 carries the post-translational modification N5-methylglutamine.

It belongs to the universal ribosomal protein uL3 family. Part of the 50S ribosomal subunit. Forms a cluster with proteins L14 and L19. Post-translationally, methylated by PrmB.

Its function is as follows. One of the primary rRNA binding proteins, it binds directly near the 3'-end of the 23S rRNA, where it nucleates assembly of the 50S subunit. In Pseudomonas syringae pv. syringae (strain B728a), this protein is Large ribosomal subunit protein uL3.